The primary structure comprises 141 residues: Large ribosomal subunit protein uL11 (141 aa).

It belongs to the universal ribosomal protein uL11 family. Part of the ribosomal stalk of the 50S ribosomal subunit. Interacts with L10 and the large rRNA to form the base of the stalk. L10 forms an elongated spine to which L12 dimers bind in a sequential fashion forming a multimeric L10(L12)X complex. In terms of processing, one or more lysine residues are methylated.

Functionally, forms part of the ribosomal stalk which helps the ribosome interact with GTP-bound translation factors. The protein is Large ribosomal subunit protein uL11 of Desulfotalea psychrophila (strain LSv54 / DSM 12343).